The primary structure comprises 185 residues: Large ribosomal subunit protein uL6m (185 aa).

The protein belongs to the universal ribosomal protein uL6 family.

It is found in the mitochondrion. The chain is Large ribosomal subunit protein uL6m (RPL6) from Reclinomonas americana.